A 487-amino-acid polypeptide reads, in one-letter code: Glycogen synthase (487 aa).

K23 provides a ligand contact to ADP-alpha-D-glucose.

It belongs to the glycosyltransferase 1 family. Bacterial/plant glycogen synthase subfamily.

It catalyses the reaction [(1-&gt;4)-alpha-D-glucosyl](n) + ADP-alpha-D-glucose = [(1-&gt;4)-alpha-D-glucosyl](n+1) + ADP + H(+). The protein operates within glycan biosynthesis; glycogen biosynthesis. Synthesizes alpha-1,4-glucan chains using ADP-glucose. The protein is Glycogen synthase of Pseudomonas fluorescens (strain Pf0-1).